The sequence spans 299 residues: tRNA pseudouridine synthase A (299 aa).

The Nucleophile role is filled by D67. Y125 serves as a coordination point for substrate.

Belongs to the tRNA pseudouridine synthase TruA family. In terms of assembly, homodimer.

It carries out the reaction uridine(38/39/40) in tRNA = pseudouridine(38/39/40) in tRNA. Its function is as follows. Formation of pseudouridine at positions 38, 39 and 40 in the anticodon stem and loop of transfer RNAs. This chain is tRNA pseudouridine synthase A, found in Parasynechococcus marenigrum (strain WH8102).